Consider the following 141-residue polypeptide: Holo-[acyl-carrier-protein] synthase (141 aa).

2 residues coordinate Mg(2+): Asp-8 and Glu-63.

Belongs to the P-Pant transferase superfamily. AcpS family. The cofactor is Mg(2+).

It localises to the cytoplasm. The catalysed reaction is apo-[ACP] + CoA = holo-[ACP] + adenosine 3',5'-bisphosphate + H(+). Functionally, transfers the 4'-phosphopantetheine moiety from coenzyme A to a Ser of acyl-carrier-protein. The protein is Holo-[acyl-carrier-protein] synthase of Rhodospirillum centenum (strain ATCC 51521 / SW).